Consider the following 451-residue polypeptide: Trigger factor (451 aa).

Residues 165–250 (DDKLTIDFEG…LHQIQVREAL (86 aa)) enclose the PPIase FKBP-type domain.

This sequence belongs to the FKBP-type PPIase family. Tig subfamily.

It localises to the cytoplasm. The enzyme catalyses [protein]-peptidylproline (omega=180) = [protein]-peptidylproline (omega=0). In terms of biological role, involved in protein export. Acts as a chaperone by maintaining the newly synthesized protein in an open conformation. Functions as a peptidyl-prolyl cis-trans isomerase. This Helicobacter pylori (strain P12) protein is Trigger factor.